Here is a 336-residue protein sequence, read N- to C-terminus: Fructose-1,6-bisphosphatase class 1 (336 aa).

Glu-90, Asp-112, Leu-114, and Asp-115 together coordinate Mg(2+). Substrate-binding positions include 115 to 118 (DGSS), Asn-211, and Lys-277. Residue Glu-283 participates in Mg(2+) binding.

Belongs to the FBPase class 1 family. As to quaternary structure, homotetramer. It depends on Mg(2+) as a cofactor.

It is found in the cytoplasm. The catalysed reaction is beta-D-fructose 1,6-bisphosphate + H2O = beta-D-fructose 6-phosphate + phosphate. The protein operates within carbohydrate biosynthesis; gluconeogenesis. The polypeptide is Fructose-1,6-bisphosphatase class 1 (Pseudomonas fluorescens (strain ATCC BAA-477 / NRRL B-23932 / Pf-5)).